The chain runs to 306 residues: Putative S-adenosyl-L-methionine-dependent methyltransferase MAP_4190c (306 aa).

Residues D129 and D158–L159 contribute to the S-adenosyl-L-methionine site.

The protein belongs to the UPF0677 family.

In terms of biological role, exhibits S-adenosyl-L-methionine-dependent methyltransferase activity. This chain is Putative S-adenosyl-L-methionine-dependent methyltransferase MAP_4190c, found in Mycolicibacterium paratuberculosis (strain ATCC BAA-968 / K-10) (Mycobacterium paratuberculosis).